We begin with the raw amino-acid sequence, 294 residues long: uncharacterized protein (294 aa).

Residues 181–204 (DEPFPTTKNHNNDKRETNDKDDQQ) form a disordered region. A compositionally biased stretch (basic and acidic residues) spans 190–204 (HNNDKRETNDKDDQQ).

This sequence belongs to the IIV-6 391R family.

This is an uncharacterized protein from Acheta domesticus (House cricket).